The following is a 64-amino-acid chain: DNA-binding protein 7b (64 aa).

Belongs to the 7 kDa DNA-binding/endoribonuclease P2 family. In terms of assembly, monomer.

Its subcellular location is the cytoplasm. Its function is as follows. Can constrain negative DNA supercoils. May be involved in maintaining the integrity of the genome at high temperature. This chain is DNA-binding protein 7b, found in Saccharolobus islandicus (strain HVE10/4) (Sulfolobus islandicus).